The following is a 411-amino-acid chain: Signal-transducing adaptor protein 2 (411 aa).

The region spanning 20–120 (HYYESFLEKK…GFILTVVELR (101 aa)) is the PH domain. Tyr22 bears the Phosphotyrosine mark. Positions 152–248 (WCFLQVSRLE…RALVPFLLDE (97 aa)) constitute an SH2 domain. The residue at position 250 (Tyr250) is a Phosphotyrosine; by PTK6. The interval 291 to 320 (VPVSVSSQEDKLPQLPPLPQLPDTDENYVT) is disordered. Tyr318 and Tyr330 each carry phosphotyrosine. The tract at residues 338 to 364 (SSQAVPLKPKKPARLPAKPPKPSVVPK) is disordered. Residues 390–410 (TRLGDITAELEEKLQKRRALE) adopt a coiled-coil conformation.

In terms of assembly, interacts with PTK6 and CSF1R. In terms of processing, phosphorylated on tyrosine. Phosphorylated by PTK6 at Tyr-250 modulates PTK6-mediated STAT3 activation. Widely expressed.

It localises to the cytoplasm. The protein resides in the membrane. Functionally, substrate of protein kinase PTK6. May play a regulatory role in the acute-phase response in systemic inflammation and may modulate STAT3 activity. The polypeptide is Signal-transducing adaptor protein 2 (Stap2) (Mus musculus (Mouse)).